The following is a 236-amino-acid chain: Exosome complex component Rrp4 (236 aa).

An S1 motif domain is found at 64–133 (GDKVIGKIIE…EIKESWLTLK (70 aa)). The KH domain maps to 141 to 199 (EGGHMVLIHASRVPRVIGKGGGMVNMVKELTSTRIIIGQNGLIWIDGPIEGVTMAIAAI).

Belongs to the RRP4 family. As to quaternary structure, component of the archaeal exosome complex. Forms a trimer of Rrp4 and/or Csl4 subunits. The trimer associates with a hexameric ring-like arrangement composed of 3 Rrp41-Rrp42 heterodimers.

It localises to the cytoplasm. Its function is as follows. Non-catalytic component of the exosome, which is a complex involved in RNA degradation. Increases the RNA binding and the efficiency of RNA degradation. Confers strong poly(A) specificity to the exosome. The protein is Exosome complex component Rrp4 of Thermoplasma volcanium (strain ATCC 51530 / DSM 4299 / JCM 9571 / NBRC 15438 / GSS1).